We begin with the raw amino-acid sequence, 204 residues long: Recombination protein RecR (204 aa).

Residues 63–78 (CRICFNVADSELCPIC) form a C4-type zinc finger. The region spanning 86–181 (NKICVVEQPQ…KVTRLARGLP (96 aa)) is the Toprim domain.

The protein belongs to the RecR family.

Its function is as follows. May play a role in DNA repair. It seems to be involved in an RecBC-independent recombinational process of DNA repair. It may act with RecF and RecO. The sequence is that of Recombination protein RecR from Dehalococcoides mccartyi (strain ATCC BAA-2266 / KCTC 15142 / 195) (Dehalococcoides ethenogenes (strain 195)).